The sequence spans 206 residues: IMPACT family member HI_0722 (206 aa).

It belongs to the IMPACT family.

The sequence is that of IMPACT family member HI_0722 from Haemophilus influenzae (strain ATCC 51907 / DSM 11121 / KW20 / Rd).